Reading from the N-terminus, the 416-residue chain is Gamma-glutamyl phosphate reductase (416 aa).

Belongs to the gamma-glutamyl phosphate reductase family.

It is found in the cytoplasm. It catalyses the reaction L-glutamate 5-semialdehyde + phosphate + NADP(+) = L-glutamyl 5-phosphate + NADPH + H(+). It functions in the pathway amino-acid biosynthesis; L-proline biosynthesis; L-glutamate 5-semialdehyde from L-glutamate: step 2/2. Functionally, catalyzes the NADPH-dependent reduction of L-glutamate 5-phosphate into L-glutamate 5-semialdehyde and phosphate. The product spontaneously undergoes cyclization to form 1-pyrroline-5-carboxylate. This Streptococcus uberis (strain ATCC BAA-854 / 0140J) protein is Gamma-glutamyl phosphate reductase.